We begin with the raw amino-acid sequence, 283 residues long: Polyamine aminopropyltransferase (283 aa).

The PABS domain occupies 2-237 (ELWYTDQHTK…GHWLFGFASK (236 aa)). Glutamine 31 is an S-methyl-5'-thioadenosine binding site. The spermidine site is built by histidine 62 and aspartate 86. Residues glutamate 106 and 137–138 (EG) contribute to the S-methyl-5'-thioadenosine site. The active-site Proton acceptor is aspartate 155. Spermidine is bound at residue 155-158 (DCAD). An S-methyl-5'-thioadenosine-binding site is contributed by proline 162.

The protein belongs to the spermidine/spermine synthase family. Homodimer or homotetramer.

Its subcellular location is the cytoplasm. The catalysed reaction is S-adenosyl 3-(methylsulfanyl)propylamine + putrescine = S-methyl-5'-thioadenosine + spermidine + H(+). It functions in the pathway amine and polyamine biosynthesis; spermidine biosynthesis; spermidine from putrescine: step 1/1. Catalyzes the irreversible transfer of a propylamine group from the amino donor S-adenosylmethioninamine (decarboxy-AdoMet) to putrescine (1,4-diaminobutane) to yield spermidine. The sequence is that of Polyamine aminopropyltransferase from Lachnoclostridium phytofermentans (strain ATCC 700394 / DSM 18823 / ISDg) (Clostridium phytofermentans).